The sequence spans 160 residues: MPSFDIQSELNKHEVSNAVDQANREVATRFDFKGSGATYKYEGNSITLQAETDFQLKQMIDILQNKFAKRQIDVAHMKLEDPIIQHKSAQQTVMLLEGIDQTAAKKIIKLIKDQKLKVQAAIQGEKVRVTGKKRDDLQSVIGLLKEQEIGLPLQFDNFRD.

The protein belongs to the YajQ family.

Functionally, nucleotide-binding protein. The polypeptide is Nucleotide-binding protein CBU_0114 (Coxiella burnetii (strain RSA 493 / Nine Mile phase I)).